The primary structure comprises 268 residues: Small ribosomal subunit protein eS1 (268 aa).

Residues 1 to 21 are disordered; it reads MAVGKNKGLSKGGKKGGKKKV.

This sequence belongs to the eukaryotic ribosomal protein eS1 family. As to quaternary structure, component of the small ribosomal subunit. Mature ribosomes consist of a small (40S) and a large (60S) subunit. The 40S subunit contains about 33 different proteins and 1 molecule of RNA (18S). The 60S subunit contains about 49 different proteins and 3 molecules of RNA (28S, 5.8S and 5S).

The protein localises to the cytoplasm. Functionally, essential for oogenesis; required for late follicle cell development. This chain is Small ribosomal subunit protein eS1, found in Drosophila sechellia (Fruit fly).